Consider the following 570-residue polypeptide: Proline--tRNA ligase (570 aa).

This sequence belongs to the class-II aminoacyl-tRNA synthetase family. ProS type 1 subfamily. Homodimer.

Its subcellular location is the cytoplasm. The enzyme catalyses tRNA(Pro) + L-proline + ATP = L-prolyl-tRNA(Pro) + AMP + diphosphate. Catalyzes the attachment of proline to tRNA(Pro) in a two-step reaction: proline is first activated by ATP to form Pro-AMP and then transferred to the acceptor end of tRNA(Pro). As ProRS can inadvertently accommodate and process non-cognate amino acids such as alanine and cysteine, to avoid such errors it has two additional distinct editing activities against alanine. One activity is designated as 'pretransfer' editing and involves the tRNA(Pro)-independent hydrolysis of activated Ala-AMP. The other activity is designated 'posttransfer' editing and involves deacylation of mischarged Ala-tRNA(Pro). The misacylated Cys-tRNA(Pro) is not edited by ProRS. The polypeptide is Proline--tRNA ligase (Clostridium perfringens (strain ATCC 13124 / DSM 756 / JCM 1290 / NCIMB 6125 / NCTC 8237 / Type A)).